The following is a 551-amino-acid chain: Chaperonin GroEL (551 aa).

Residues 29–32 (TAGP), lysine 50, 86–90 (DGTTT), glycine 417, and aspartate 499 each bind ATP.

This sequence belongs to the chaperonin (HSP60) family. As to quaternary structure, forms a cylinder of 14 subunits composed of two heptameric rings stacked back-to-back. Interacts with the co-chaperonin GroES.

The protein localises to the cytoplasm. The enzyme catalyses ATP + H2O + a folded polypeptide = ADP + phosphate + an unfolded polypeptide.. Functionally, together with its co-chaperonin GroES, plays an essential role in assisting protein folding. The GroEL-GroES system forms a nano-cage that allows encapsulation of the non-native substrate proteins and provides a physical environment optimized to promote and accelerate protein folding. In Ehrlichia ruminantium (strain Gardel), this protein is Chaperonin GroEL.